The sequence spans 288 residues: Mycothiol S-conjugate amidase (288 aa).

Zn(2+) is bound by residues H12, D15, and H142.

Belongs to the MshB deacetylase family. Mca subfamily. As to quaternary structure, monomer. It depends on Zn(2+) as a cofactor.

It carries out the reaction mycothiol S-conjugate + H2O = an N-acetyl-L-cysteine-S-conjugate + 1D-myo-inositol 2-amino-2-deoxy-alpha-D-glucopyranoside. Its activity is regulated as follows. Partially inhibited by MSH when MSmB is used as substrate. Competitively inhibited by the GlcNAc-cyclohexyl derivative 5-(4-chlorophenyl)-N-((2R,3R,4R,5S,6R)-2-(cyclohexylthio)-tetrahydro-4,5-dihydroxy-6-(hydroxymethyl)-2H-pyran-3-yl)furan-2-carboxamide, which also inhibits MshB. Its function is as follows. A mycothiol (MSH, N-acetyl-cysteinyl-glucosaminyl-inositol) S-conjugate amidase, it recycles conjugated MSH to the N-acetyl cysteine conjugate and the MSH precursor. Involved in MSH-dependent detoxification of a number of alkylating agents and antibiotics. Activity is specific for the mycothiol moiety. Has a low but measurable deacetylation activity on GlcNAc-Ins (N-acetyl-glucosaminyl-inositol), and thus can also directly contribute to the production of MSH. In Mycobacterium tuberculosis (strain ATCC 25618 / H37Rv), this protein is Mycothiol S-conjugate amidase.